A 357-amino-acid polypeptide reads, in one-letter code: 3-dehydroquinate synthase (357 aa).

NAD(+) is bound by residues 104–108, 128–129, K141, and 168–171; these read GVVGD, TT, and FLET. Zn(2+) contacts are provided by E183, H243, and H260.

It belongs to the sugar phosphate cyclases superfamily. Dehydroquinate synthase family. NAD(+) is required as a cofactor. It depends on Co(2+) as a cofactor. The cofactor is Zn(2+).

It is found in the cytoplasm. The catalysed reaction is 7-phospho-2-dehydro-3-deoxy-D-arabino-heptonate = 3-dehydroquinate + phosphate. It participates in metabolic intermediate biosynthesis; chorismate biosynthesis; chorismate from D-erythrose 4-phosphate and phosphoenolpyruvate: step 2/7. Catalyzes the conversion of 3-deoxy-D-arabino-heptulosonate 7-phosphate (DAHP) to dehydroquinate (DHQ). This Streptococcus pyogenes serotype M6 (strain ATCC BAA-946 / MGAS10394) protein is 3-dehydroquinate synthase.